We begin with the raw amino-acid sequence, 466 residues long: UDP-N-acetylmuramate--L-alanine ligase (466 aa).

Residue 119–125 participates in ATP binding; it reads GTHGKTT.

The protein belongs to the MurCDEF family.

The protein localises to the cytoplasm. It catalyses the reaction UDP-N-acetyl-alpha-D-muramate + L-alanine + ATP = UDP-N-acetyl-alpha-D-muramoyl-L-alanine + ADP + phosphate + H(+). It participates in cell wall biogenesis; peptidoglycan biosynthesis. Its function is as follows. Cell wall formation. The sequence is that of UDP-N-acetylmuramate--L-alanine ligase from Cytophaga hutchinsonii (strain ATCC 33406 / DSM 1761 / CIP 103989 / NBRC 15051 / NCIMB 9469 / D465).